The sequence spans 153 residues: MPLLLSGRGFRRELESAGCMAVHAPLEGGAETRLLRRLRAAGYRTHLTSARGLGDPEVFLFQKHGVRPPHLGHQSVGRGAAVGEVHDVMPLLGEVFLGDKPVVLWLLEGQVLSRSELLSLCDLCRREPRLKIVVEMGGARSLRWQPMTQLLAA.

Belongs to the complex I NdhN subunit family. In terms of assembly, NDH-1 can be composed of about 15 different subunits; different subcomplexes with different compositions have been identified which probably have different functions.

Its subcellular location is the cellular thylakoid membrane. The catalysed reaction is a plastoquinone + NADH + (n+1) H(+)(in) = a plastoquinol + NAD(+) + n H(+)(out). It catalyses the reaction a plastoquinone + NADPH + (n+1) H(+)(in) = a plastoquinol + NADP(+) + n H(+)(out). Functionally, NDH-1 shuttles electrons from an unknown electron donor, via FMN and iron-sulfur (Fe-S) centers, to quinones in the respiratory and/or the photosynthetic chain. The immediate electron acceptor for the enzyme in this species is believed to be plastoquinone. Couples the redox reaction to proton translocation, and thus conserves the redox energy in a proton gradient. Cyanobacterial NDH-1 also plays a role in inorganic carbon-concentration. The polypeptide is NAD(P)H-quinone oxidoreductase subunit N (Synechococcus sp. (strain WH7803)).